Consider the following 355-residue polypeptide: Adenine deaminase (355 aa).

Positions 24, 26, and 204 each coordinate Zn(2+). The Proton donor role is filled by E207. D285 contacts Zn(2+). D286 is a binding site for substrate.

It belongs to the metallo-dependent hydrolases superfamily. Adenosine and AMP deaminases family. Adenine deaminase type 2 subfamily. Zn(2+) is required as a cofactor.

The catalysed reaction is adenine + H2O + H(+) = hypoxanthine + NH4(+). Its function is as follows. Catalyzes the hydrolytic deamination of adenine to hypoxanthine. Plays an important role in the purine salvage pathway and in nitrogen catabolism. This is Adenine deaminase from Geotalea uraniireducens (strain Rf4) (Geobacter uraniireducens).